Consider the following 551-residue polypeptide: CTP synthase (551 aa).

The tract at residues 1–265 is amidoligase domain; sequence MTRYLFITGG…DHIVAEKWGL (265 aa). CTP is bound at residue Ser13. Residue Ser13 participates in UTP binding. ATP contacts are provided by residues 14 to 19 and Asp71; that span reads SLGKGI. Residues Asp71 and Glu139 each contribute to the Mg(2+) site. CTP is bound by residues 146-148, 186-191, and Lys222; these read DIE and KTKPTQ. Residues 186-191 and Lys222 contribute to the UTP site; that span reads KTKPTQ. One can recognise a Glutamine amidotransferase type-1 domain in the interval 290 to 541; sequence TVAMVGKYVD…LRAAIAHRDG (252 aa). Gly351 provides a ligand contact to L-glutamine. The active-site Nucleophile; for glutamine hydrolysis is Cys378. L-glutamine is bound by residues 379-382, Glu402, and Arg469; that span reads LGMQ. Catalysis depends on residues His514 and Glu516.

This sequence belongs to the CTP synthase family. Homotetramer.

The enzyme catalyses UTP + L-glutamine + ATP + H2O = CTP + L-glutamate + ADP + phosphate + 2 H(+). The catalysed reaction is L-glutamine + H2O = L-glutamate + NH4(+). It carries out the reaction UTP + NH4(+) + ATP = CTP + ADP + phosphate + 2 H(+). It participates in pyrimidine metabolism; CTP biosynthesis via de novo pathway; CTP from UDP: step 2/2. Allosterically activated by GTP, when glutamine is the substrate; GTP has no effect on the reaction when ammonia is the substrate. The allosteric effector GTP functions by stabilizing the protein conformation that binds the tetrahedral intermediate(s) formed during glutamine hydrolysis. Inhibited by the product CTP, via allosteric rather than competitive inhibition. In terms of biological role, catalyzes the ATP-dependent amination of UTP to CTP with either L-glutamine or ammonia as the source of nitrogen. Regulates intracellular CTP levels through interactions with the four ribonucleotide triphosphates. The sequence is that of CTP synthase from Halorhodospira halophila (strain DSM 244 / SL1) (Ectothiorhodospira halophila (strain DSM 244 / SL1)).